Reading from the N-terminus, the 225-residue chain is Ribosomal RNA small subunit methyltransferase G (225 aa).

S-adenosyl-L-methionine-binding positions include Gly-62, 113-114 (AE), and Lys-130.

The protein belongs to the methyltransferase superfamily. RNA methyltransferase RsmG family.

Its subcellular location is the cytoplasm. In terms of biological role, specifically methylates the N7 position of a guanine in 16S rRNA. The polypeptide is Ribosomal RNA small subunit methyltransferase G (Petrotoga mobilis (strain DSM 10674 / SJ95)).